The following is an 818-amino-acid chain: MAVTNEEIKTASKIVRRVSNVEAFDKSGSVFKGYQIWTDISPTIENDPNIMFVKCVVQQGSKKEKLTVVQIDPPGTGTPYDIDPTHAWNCNSQVDPMSFGDIGLLNHTNIPCVLDFLKHRYLKNQIYTTAVPLIVAINPYKDLGNTTNEWIRRYRDTADHTKLPPHVFTCAREALSNLHGVNKSQTIIVSGESGAGKTEATKQIMRYFASSKSGNMDLRIQTAIMAANPVLEAFGNAKTIRNNNSSRFGRFMQLVISHEGGIRYGSVVAFLLEKSRIITQDDNERSYHIFYQFLKGANSTMKSKFGLKGVTEYKLLNPNSTEVSGVDDVKDFEEVIESLKNMELSESDIEVIFSIVAGILTLGNVRLIEKQEAGLSDAAAIMDEDMGVFNKACELMYLDPELIKREILIKVTVAGGTKIEGRWNKNDAEVLKSSLCKAMYEKLFLWIIRHLNSRIEPEGGFKTFMGMLDIFGFEVFKNNSLEQLFINITNEMLQKNFVDIVFERESKLYKDEGISTAELKYTSNKEVINVLCEKGKSVLSYLEDQCLAPGGTDEKFVSSCATNLKENNKFTPAKVASNKNFIIQHTIGPIQYCAESFLLKNKDVLRGDLVEVIKDSPNPIVQQLFEGQVIEKGKIAKGSLIGSQFLNQLTSLMNLINSTEPHFIRCIKPNENKKPLEWCEPKILIQLHALSILEALVLRQLGYSYRRTFEEFLYQYKFVDIAAAEDSSVENQNKCVNILKLSGLSESMYKIGKSMVFLKQEGAKILTKIQREKLVEWENCVSVIEAAILKHKYKQKVNKNIPSLLRVQAHIRKKMVAQ.

At serine 19 the chain carries Phosphoserine; by PKG. One can recognise a Myosin motor domain in the interval 97–771 (MSFGDIGLLN…GAKILTKIQR (675 aa)). Residue 191 to 198 (GESGAGKT) coordinates ATP. The interval 661 to 671 (PHFIRCIKPNE) is actin-binding. The segment at 773–818 (KLVEWENCVSVIEAAILKHKYKQKVNKNIPSLLRVQAHIRKKMVAQ) is tail.

It belongs to the TRAFAC class myosin-kinesin ATPase superfamily. Myosin family. As to quaternary structure, component of the glideosome complex composed of GAP50, GAP45, MTIP and MyoA; the complex is formed during the late schizont stage and in merozoites. MyoA, MTIP and GAP45 probably form an initial complex in the cytoplasm which is then recruited to the outer face of the inner membrane complex via the interaction with GAP50. Interacts with ACT1.

The protein localises to the cell membrane. Functionally, myosins are actin-based motor molecules with ATPase activity. Unconventional myosins serve in intracellular movements. Their highly divergent tails are presumed to bind to membranous compartments, which would be moved relative to actin filaments. The polypeptide is Myosin-A (Plasmodium falciparum (isolate 3D7)).